The chain runs to 344 residues: N-acetyl-gamma-glutamyl-phosphate reductase (344 aa).

Residue Cys149 is part of the active site.

The protein belongs to the NAGSA dehydrogenase family. Type 1 subfamily.

The protein resides in the cytoplasm. It catalyses the reaction N-acetyl-L-glutamate 5-semialdehyde + phosphate + NADP(+) = N-acetyl-L-glutamyl 5-phosphate + NADPH + H(+). It participates in amino-acid biosynthesis; L-arginine biosynthesis; N(2)-acetyl-L-ornithine from L-glutamate: step 3/4. Catalyzes the NADPH-dependent reduction of N-acetyl-5-glutamyl phosphate to yield N-acetyl-L-glutamate 5-semialdehyde. The sequence is that of N-acetyl-gamma-glutamyl-phosphate reductase from Syntrophobacter fumaroxidans (strain DSM 10017 / MPOB).